Consider the following 569-residue polypeptide: Beta-lactamase-like protein 4 (569 aa).

Residues 1–19 (MKYYLYLFLLFTFANLLYS) form the signal peptide. N-linked (GlcNAc...) asparagine glycosylation is found at Asn-87, Asn-172, Asn-239, Asn-240, Asn-250, Asn-299, Asn-343, Asn-412, Asn-419, Asn-436, Asn-468, Asn-509, and Asn-535.

This sequence belongs to the beta-lactamase family.

Its subcellular location is the secreted. This is Beta-lactamase-like protein 4 from Dictyostelium discoideum (Social amoeba).